The primary structure comprises 130 residues: Small ribosomal subunit protein uS9 (130 aa).

This sequence belongs to the universal ribosomal protein uS9 family.

The sequence is that of Small ribosomal subunit protein uS9 from Streptococcus gordonii (strain Challis / ATCC 35105 / BCRC 15272 / CH1 / DL1 / V288).